A 278-amino-acid polypeptide reads, in one-letter code: Orotidine 5'-phosphate decarboxylase (278 aa).

The active-site Proton donor is the Lys-96.

It belongs to the OMP decarboxylase family. Type 2 subfamily.

The catalysed reaction is orotidine 5'-phosphate + H(+) = UMP + CO2. It functions in the pathway pyrimidine metabolism; UMP biosynthesis via de novo pathway; UMP from orotate: step 2/2. The protein is Orotidine 5'-phosphate decarboxylase (pyrF) of Streptomyces coelicolor (strain ATCC BAA-471 / A3(2) / M145).